The primary structure comprises 593 residues: Arginine--tRNA ligase (593 aa).

The short motif at Ala138–His148 is the 'HIGH' region element.

Belongs to the class-I aminoacyl-tRNA synthetase family. Monomer.

It localises to the cytoplasm. It catalyses the reaction tRNA(Arg) + L-arginine + ATP = L-arginyl-tRNA(Arg) + AMP + diphosphate. This chain is Arginine--tRNA ligase, found in Burkholderia ambifaria (strain ATCC BAA-244 / DSM 16087 / CCUG 44356 / LMG 19182 / AMMD) (Burkholderia cepacia (strain AMMD)).